The primary structure comprises 322 residues: uncharacterized protein (322 aa).

Transmembrane regions (helical) follow at residues 5–25 (LISIIGIPALAFAISTYIPGI), 37–57 (IGPSILAPGFWAFFKFLFKET), 71–91 (LPLLSIVVLWALLSITSLTSF), 109–129 (MMYVILGSLAFSIMGWKMPFI), 153–173 (SFKMITIGSFPFYLATFLPFV), 189–209 (LFSLAGIFGAACYFIGYVIMI), 245–265 (LLLIALGSLFATLYLGIAPDI), 268–288 (PITIVENFAIALIFPILATFV), and 300–320 (IYPISYVATLIGVIGFIFALL).

It is found in the cell membrane. This is an uncharacterized protein from Methanocaldococcus jannaschii (strain ATCC 43067 / DSM 2661 / JAL-1 / JCM 10045 / NBRC 100440) (Methanococcus jannaschii).